A 332-amino-acid polypeptide reads, in one-letter code: GTP 3',8-cyclase (332 aa).

Residues 7–221 (QYERLHDYVR…FDLCKQAGLD (215 aa)) enclose the Radical SAM core domain. Arginine 16 serves as a coordination point for GTP. Positions 23 and 27 each coordinate [4Fe-4S] cluster. S-adenosyl-L-methionine is bound at residue tyrosine 29. Cysteine 30 provides a ligand contact to [4Fe-4S] cluster. Arginine 66 contributes to the GTP binding site. Glycine 70 is an S-adenosyl-L-methionine binding site. Threonine 97 serves as a coordination point for GTP. An S-adenosyl-L-methionine-binding site is contributed by serine 121. Residue lysine 158 coordinates GTP. Methionine 192 contacts S-adenosyl-L-methionine. [4Fe-4S] cluster-binding residues include cysteine 256 and cysteine 259. Residue 261 to 263 (RLR) coordinates GTP. Residue cysteine 273 coordinates [4Fe-4S] cluster.

This sequence belongs to the radical SAM superfamily. MoaA family. As to quaternary structure, monomer and homodimer. Requires [4Fe-4S] cluster as cofactor.

It carries out the reaction GTP + AH2 + S-adenosyl-L-methionine = (8S)-3',8-cyclo-7,8-dihydroguanosine 5'-triphosphate + 5'-deoxyadenosine + L-methionine + A + H(+). It participates in cofactor biosynthesis; molybdopterin biosynthesis. Functionally, catalyzes the cyclization of GTP to (8S)-3',8-cyclo-7,8-dihydroguanosine 5'-triphosphate. In Limosilactobacillus fermentum (strain NBRC 3956 / LMG 18251) (Lactobacillus fermentum), this protein is GTP 3',8-cyclase.